The sequence spans 318 residues: Coproporphyrin III ferrochelatase (318 aa).

The Fe(2+) site is built by H186 and E268.

Belongs to the ferrochelatase family.

Its subcellular location is the cytoplasm. It carries out the reaction Fe-coproporphyrin III + 2 H(+) = coproporphyrin III + Fe(2+). Its pathway is porphyrin-containing compound metabolism; protoheme biosynthesis. Involved in coproporphyrin-dependent heme b biosynthesis. Catalyzes the insertion of ferrous iron into coproporphyrin III to form Fe-coproporphyrin III. This is Coproporphyrin III ferrochelatase from Lactococcus lactis subsp. cremoris (strain SK11).